Here is a 215-residue protein sequence, read N- to C-terminus: MKRTKQINHASFRKHWRAYRMAPVALAVGAVFVLAGCEKSDENVSLYMNSDDCARANPSLSEQCTTAYNAAQQEAVKTAPKYASRADCVAEFGEEQCTQVPAQAGMAAESQHSGSMWMPLMAGYMMGRMMVGGYSQQPLFTSLAANSPARGQFVDARGRNYGASTSGRSMTVPKTALAPKPATTQTITRGGFGETVAKQNALRSSSATPHRTMGG.

This sequence belongs to the UPF0441 family.

This chain is UPF0441 protein SG0265, found in Sodalis glossinidius (strain morsitans).